A 206-amino-acid chain; its full sequence is Guanylate kinase (206 aa).

The Guanylate kinase-like domain maps to 6–184 (GNLFILSAPS…ALTDIETIVM (179 aa)). ATP is bound at residue 13–20 (APSGAGKS).

It belongs to the guanylate kinase family.

The protein localises to the cytoplasm. The catalysed reaction is GMP + ATP = GDP + ADP. Essential for recycling GMP and indirectly, cGMP. This is Guanylate kinase from Pseudoalteromonas translucida (strain TAC 125).